The following is a 636-amino-acid chain: 1-deoxy-D-xylulose-5-phosphate synthase (636 aa).

Thiamine diphosphate-binding positions include H75 and A116–S118. A Mg(2+)-binding site is contributed by D147. Thiamine diphosphate contacts are provided by residues G148–A149, N177, Y288, and E370. Position 177 (N177) interacts with Mg(2+).

It belongs to the transketolase family. DXPS subfamily. Homodimer. Mg(2+) is required as a cofactor. Requires thiamine diphosphate as cofactor.

The enzyme catalyses D-glyceraldehyde 3-phosphate + pyruvate + H(+) = 1-deoxy-D-xylulose 5-phosphate + CO2. The protein operates within metabolic intermediate biosynthesis; 1-deoxy-D-xylulose 5-phosphate biosynthesis; 1-deoxy-D-xylulose 5-phosphate from D-glyceraldehyde 3-phosphate and pyruvate: step 1/1. Functionally, catalyzes the acyloin condensation reaction between C atoms 2 and 3 of pyruvate and glyceraldehyde 3-phosphate to yield 1-deoxy-D-xylulose-5-phosphate (DXP). This chain is 1-deoxy-D-xylulose-5-phosphate synthase, found in Ralstonia pickettii (strain 12J).